A 190-amino-acid polypeptide reads, in one-letter code: Protein soem-1 (190 aa).

Positions 96-190 (YMEQNMNRVE…LVLKNQLKPV (95 aa)) constitute an SH2 domain.

Interacts with abl-1. As to expression, expressed in PQR, but not AQR, Q neuroblast descendents.

In terms of biological role, functions downstream of migratory protein mig-13 and may play a role in the control of Q neuroblast migration during larval development. The polypeptide is Protein soem-1 (Caenorhabditis elegans).